The chain runs to 356 residues: tRNA-specific 2-thiouridylase MnmA (356 aa).

6–13 (AVSGGTDS) is a binding site for ATP. Residue cysteine 95 is the Nucleophile of the active site. A disulfide bridge connects residues cysteine 95 and cysteine 195. Glycine 119 provides a ligand contact to ATP. The interaction with tRNA stretch occupies residues 145–147 (KDQ). The Cysteine persulfide intermediate role is filled by cysteine 195. Positions 300 to 301 (RY) are interaction with tRNA.

It belongs to the MnmA/TRMU family.

It is found in the cytoplasm. The catalysed reaction is S-sulfanyl-L-cysteinyl-[protein] + uridine(34) in tRNA + AH2 + ATP = 2-thiouridine(34) in tRNA + L-cysteinyl-[protein] + A + AMP + diphosphate + H(+). Functionally, catalyzes the 2-thiolation of uridine at the wobble position (U34) of tRNA, leading to the formation of s(2)U34. This is tRNA-specific 2-thiouridylase MnmA from Oleidesulfovibrio alaskensis (strain ATCC BAA-1058 / DSM 17464 / G20) (Desulfovibrio alaskensis).